Here is a 354-residue protein sequence, read N- to C-terminus: Probable glucan endo-1,3-beta-glucosidase BG5 (354 aa).

Residues 1-30 form the signal peptide; the sequence is MLYLPKKLFLFFFSCIVVIVNYNNSDFVNA. The active-site Proton donor is E137. E276 acts as the Nucleophile in catalysis. Residue N286 is glycosylated (N-linked (GlcNAc...) asparagine).

Belongs to the glycosyl hydrolase 17 family.

The protein resides in the secreted. The enzyme catalyses Hydrolysis of (1-&gt;3)-beta-D-glucosidic linkages in (1-&gt;3)-beta-D-glucans.. May play a role in plant defense against pathogens. The chain is Probable glucan endo-1,3-beta-glucosidase BG5 from Arabidopsis thaliana (Mouse-ear cress).